We begin with the raw amino-acid sequence, 908 residues long: 26S proteasome non-ATPase regulatory subunit 2 (908 aa).

Met-1 is modified (N-acetylmethionine). The interval 1 to 52 (MEEGGRDKAPVQPQQSPAAALGGTDEKPSGKERRDAGDKDKEQELSEEDKQL) is disordered. Residues 10-20 (PVQPQQSPAAA) are compositionally biased toward low complexity. Position 16 is a phosphoserine (Ser-16). Thr-24 carries the post-translational modification Phosphothreonine. A compositionally biased stretch (basic and acidic residues) spans 24 to 52 (TDEKPSGKERRDAGDKDKEQELSEEDKQL). 2 positions are modified to phosphoserine: Ser-29 and Ser-147. Tyr-194 carries the phosphotyrosine modification. A phosphoserine mark is found at Ser-361 and Ser-363. PC repeat units follow at residues 409–442 (SAAASLGMILLWDVDGGLTQIDKYLYSSEDYIKS), 443–479 (GALLACGIVNSGVRNECDPALALLSDYVLHNSNTMRL), 480–514 (GSIFGLGLAYAGSNREDVLTLLLPVMGDSKSSMEV), 517–551 (VTALACGMIAVGSCNGDVTSTILQTIMEKSETELK), and 560–589 (LGLGLNHLGKGEAIEAILAALEVVSEPFRS). Lys-551 is subject to N6-acetyllysine. The span at 623–643 (KEKEEDKDKKEKKDKDKKEAP) shows a compositional bias: basic and acidic residues. The segment at 623 to 645 (KEKEEDKDKKEKKDKDKKEAPAD) is disordered. PC repeat units lie at residues 692 to 723 (LALALISVSNPRLNILDTLSKFSHDADPEVSY) and 742 to 757 (AAMLRQLAQYHAKDPN). Residues 708 to 903 (DTLSKFSHDA…LEGFVILRKN (196 aa)) are required for interaction with UBLCP1.

This sequence belongs to the proteasome subunit S2 family. In terms of assembly, component of the 19S proteasome regulatory particle complex. The 26S proteasome consists of a 20S core particle (CP) and two 19S regulatory subunits (RP). The regulatory particle is made of a lid composed of 9 subunits, a base containing 6 ATPases and few additional components including PSMD2. Interacts with RPGRIP1L. Interacts with CRY1 in a KDM8-dependent manner. Interacts (via C-terminus) with phosphatase UBLCP1 (via ubiquitin-like domain); the interaction recruits UBLCP1 to the 19S regulatory particle where it dephosphorylates 19S subunit PSMC2/RPT1 which impairs PSMC2 ATPase activity and disrupts 26S proteasome assembly.

In terms of biological role, component of the 26S proteasome, a multiprotein complex involved in the ATP-dependent degradation of ubiquitinated proteins. This complex plays a key role in the maintenance of protein homeostasis by removing misfolded or damaged proteins, which could impair cellular functions, and by removing proteins whose functions are no longer required. Therefore, the proteasome participates in numerous cellular processes, including cell cycle progression, apoptosis, or DNA damage repair. Its function is as follows. Binds to the intracellular domain of tumor necrosis factor type 1 receptor. The binding domain of TRAP1 and TRAP2 resides outside the death domain of TNFR1. The sequence is that of 26S proteasome non-ATPase regulatory subunit 2 (PSMD2) from Pongo abelii (Sumatran orangutan).